A 428-amino-acid chain; its full sequence is Histidine--tRNA ligase (428 aa).

This sequence belongs to the class-II aminoacyl-tRNA synthetase family.

It is found in the cytoplasm. The enzyme catalyses tRNA(His) + L-histidine + ATP = L-histidyl-tRNA(His) + AMP + diphosphate + H(+). This is Histidine--tRNA ligase from Sulfolobus acidocaldarius (strain ATCC 33909 / DSM 639 / JCM 8929 / NBRC 15157 / NCIMB 11770).